Reading from the N-terminus, the 67-residue chain is Conotoxin Cal12.1p2 (67 aa).

Positions 1 to 21 (DLITNSYTRGKPRHVTSWRNL) are excised as a propeptide.

Contains 4 disulfide bonds. In terms of tissue distribution, expressed by the venom duct.

It localises to the secreted. This is Conotoxin Cal12.1p2 from Californiconus californicus (California cone).